Here is a 347-residue protein sequence, read N- to C-terminus: D-alanine--D-alanine ligase (347 aa).

Residues 131 to 333 (KRVLESAGIA…YPELIERLVD (203 aa)) enclose the ATP-grasp domain. Position 161–216 (161–216 (EEKLAYPVFTKPSNMGSSVGISKSENQEELRQALKLAFRYDSRVLVEQGVNAREIE)) interacts with ATP. Mg(2+) contacts are provided by aspartate 287, glutamate 300, and asparagine 302.

It belongs to the D-alanine--D-alanine ligase family. Mg(2+) serves as cofactor. Mn(2+) is required as a cofactor.

It localises to the cytoplasm. The catalysed reaction is 2 D-alanine + ATP = D-alanyl-D-alanine + ADP + phosphate + H(+). The protein operates within cell wall biogenesis; peptidoglycan biosynthesis. In terms of biological role, cell wall formation. This is D-alanine--D-alanine ligase from Streptococcus pneumoniae (strain JJA).